The chain runs to 546 residues: SusD-like protein BACOVA_02651 (546 aa).

The first 21 residues, 1–21 (MRIFMKSKLLVIATTALLFAA), serve as a signal peptide directing secretion. The N-palmitoyl cysteine moiety is linked to residue C22. C22 carries the S-diacylglycerol cysteine lipid modification.

The protein belongs to the SusD family.

It localises to the cell outer membrane. It functions in the pathway glucan metabolism; xyloglucan degradation. Polysaccharide-binding protein present at the surface of the cell. Probably mediates xyloglucan-binding before xyloglucan transport in the periplasm for degradation. The sequence is that of SusD-like protein BACOVA_02651 from Bacteroides ovatus (strain ATCC 8483 / DSM 1896 / JCM 5824 / BCRC 10623 / CCUG 4943 / NCTC 11153).